The following is a 65-amino-acid chain: Large ribosomal subunit protein bL33c (65 aa).

This sequence belongs to the bacterial ribosomal protein bL33 family.

The protein localises to the plastid. It localises to the chloroplast. The protein is Large ribosomal subunit protein bL33c of Chara vulgaris (Common stonewort).